The chain runs to 405 residues: Putative aminotransferase AatC (405 aa).

The residue at position 238 (Lys-238) is an N6-(pyridoxal phosphate)lysine.

It belongs to the class-I pyridoxal-phosphate-dependent aminotransferase family. In terms of assembly, homodimer. It depends on pyridoxal 5'-phosphate as a cofactor.

The protein localises to the cytoplasm. The polypeptide is Putative aminotransferase AatC (aatC) (Rhizobium meliloti (strain 1021) (Ensifer meliloti)).